The primary structure comprises 798 residues: Ubiquitin carboxyl-terminal hydrolase 10 (798 aa).

Position 2 is an N-acetylalanine (Ala-2). Positions 2–100 (ALHSPQYIFG…ILGCTASKIT (99 aa)) are interaction with p53/TP53. Residues 6-21 (PQYIFGDFSPDEFNQF) form a G3BP1-binding region. Thr-24 is subject to Phosphothreonine. Thr-42 carries the post-translational modification Phosphothreonine; by ATM. Thr-100 bears the Phosphothreonine mark. Disordered regions lie at residues 139-166 (GVSG…LKDG), 194-257 (AEFM…CFPA), and 307-337 (TESI…LPVS). Polar residues predominate over residues 205–219 (TPRTCNSPQNSTDSV). Ser-211 and Ser-226 each carry phosphoserine. Positions 307-316 (TESIDLDPTK) are enriched in basic and acidic residues. Ser-321 is subject to Phosphoserine. Over residues 328 to 337 (GSASGTLPVS) the composition is skewed to polar residues. Position 337 is a phosphoserine; by ATM (Ser-337). 2 positions are modified to phosphoserine: Ser-365 and Ser-370. The USP domain maps to 415 to 795 (RGLINKGNWC…TAYLLYYRRV (381 aa)). The Nucleophile role is filled by Cys-424. Phosphoserine is present on Ser-547. A compositionally biased stretch (polar residues) spans 551-562 (EKLTISNGPKNH). The interval 551-594 (EKLTISNGPKNHSVNEEEQEEQGEGSEDEWEQVGPRNKTSVTRQ) is disordered. Ser-563 and Ser-576 each carry phosphoserine. Acidic residues predominate over residues 566 to 581 (EEEQEEQGEGSEDEWE). The active-site Proton acceptor is His-749.

It belongs to the peptidase C19 family. USP10 subfamily. Found in a deubiquitination complex with TANK, USP10 and ZC3H12A; this complex inhibits genotoxic stress- or interleukin-1-beta (IL1B)-mediated NF-kappa-B activation by promoting IKBKG or TRAF6 deubiquitination. Interacts with IKBKG; this interaction increases in response to DNA damage. Interacts with TANK; this interaction increases in response to DNA damage. Interacts with TRAF6; this interaction increases in response to DNA damage. Interacts with ZC3H12A; this interaction increases in response to DNA damage. Interacts with G3BP1 (via NTF2 domain) and G3BP2 (via NTF2 domain); inhibiting stress granule formation. Post-translationally, phosphorylated by ATM following DNA damage, leading to stabilization and translocation it to the nucleus. Ubiquitinated. Deubiquitinated by USP13. In terms of tissue distribution, widely expressed.

The protein resides in the cytoplasm. It is found in the nucleus. The protein localises to the early endosome. The catalysed reaction is Thiol-dependent hydrolysis of ester, thioester, amide, peptide and isopeptide bonds formed by the C-terminal Gly of ubiquitin (a 76-residue protein attached to proteins as an intracellular targeting signal).. Its activity is regulated as follows. Specifically inhibited by spautin-1 (specific and potent autophagy inhibitor-1), a derivative of MBCQ that binds to USP10 and inhibits deubiquitinase activity. Regulated by PIK3C3/VPS34-containing complexes. Its function is as follows. Hydrolase that can remove conjugated ubiquitin from target proteins such as p53/TP53, RPS2/us5, RPS3/us3, RPS10/eS10, BECN1, SNX3 and CFTR. Acts as an essential regulator of p53/TP53 stability: in unstressed cells, specifically deubiquitinates p53/TP53 in the cytoplasm, leading to counteract MDM2 action and stabilize p53/TP53. Following DNA damage, translocates to the nucleus and deubiquitinates p53/TP53, leading to regulate the p53/TP53-dependent DNA damage response. Component of a regulatory loop that controls autophagy and p53/TP53 levels: mediates deubiquitination of BECN1, a key regulator of autophagy, leading to stabilize the PIK3C3/VPS34-containing complexes. In turn, PIK3C3/VPS34-containing complexes regulate USP10 stability, suggesting the existence of a regulatory system by which PIK3C3/VPS34-containing complexes regulate p53/TP53 protein levels via USP10 and USP13. Does not deubiquitinate MDM2. Plays a key role in 40S ribosome subunit recycling when a ribosome has stalled during translation: acts both by inhibiting formation of stress granules, which store stalled translation pre-initiation complexes, and mediating deubiquitination of 40S ribosome subunits. Acts as a negative regulator of stress granules formation by lowering G3BP1 and G3BP2 valence, thereby preventing G3BP1 and G3BP2 ability to undergo liquid-liquid phase separation (LLPS) and assembly of stress granules. Promotes 40S ribosome subunit recycling following ribosome dissociation in response to ribosome stalling by mediating deubiquitination of 40S ribosomal proteins RPS2/us5, RPS3/us3 and RPS10/eS10, thereby preventing their degradation by the proteasome. Part of a ribosome quality control that takes place when ribosomes have stalled during translation initiation (iRQC): USP10 acts by removing monoubiquitination of RPS2/us5 and RPS3/us3, promoting 40S ribosomal subunit recycling. Deubiquitinates CFTR in early endosomes, enhancing its endocytic recycling. Involved in a TANK-dependent negative feedback response to attenuate NF-kappa-B activation via deubiquitinating IKBKG or TRAF6 in response to interleukin-1-beta (IL1B) stimulation or upon DNA damage. Deubiquitinates TBX21 leading to its stabilization. Plays a negative role in the RLR signaling pathway upon RNA virus infection by blocking the RIGI-mediated MAVS activation. Mechanistically, removes the unanchored 'Lys-63'-linked polyubiquitin chains of MAVS to inhibit its aggregation, essential for its activation. The sequence is that of Ubiquitin carboxyl-terminal hydrolase 10 from Homo sapiens (Human).